The sequence spans 377 residues: UPF0754 membrane protein GTNG_0550 (377 aa).

2 consecutive transmembrane segments (helical) span residues 7-27 and 357-377; these read LLFMMAVGALIGGMTNFIAIV and YLGALLGAMIGAVQGIIGLWL.

It belongs to the UPF0754 family.

It is found in the cell membrane. The polypeptide is UPF0754 membrane protein GTNG_0550 (Geobacillus thermodenitrificans (strain NG80-2)).